The sequence spans 246 residues: Serine protease 1 (246 aa).

The signal sequence occupies residues 1 to 15 (MKTFIFLALLGATVA). Positions 16–23 (FPIDDDDK) are cleaved as a propeptide — activation peptide. The region spanning 24-244 (IVGGYTCSRN…YVSWIQQTIA (221 aa)) is the Peptidase S1 domain. Intrachain disulfides connect cysteine 30/cysteine 160, cysteine 48/cysteine 64, cysteine 132/cysteine 233, cysteine 139/cysteine 206, cysteine 171/cysteine 185, and cysteine 196/cysteine 220. The Charge relay system role is filled by histidine 63. Residues glutamate 75, asparagine 77, valine 80, and glutamate 85 each contribute to the Ca(2+) site. Aspartate 107 functions as the Charge relay system in the catalytic mechanism. Residue serine 200 is the Charge relay system of the active site.

This sequence belongs to the peptidase S1 family. Interacts with SERPINA1. Requires Ca(2+) as cofactor.

It localises to the secreted. It is found in the extracellular space. The catalysed reaction is Preferential cleavage: Arg-|-Xaa, Lys-|-Xaa.. The protein is Serine protease 1 of Canis lupus familiaris (Dog).